The chain runs to 142 residues: MAP3K7 C-terminal-like protein (142 aa).

In terms of tissue distribution, ubiquitous.

The protein is MAP3K7 C-terminal-like protein (Map3k7cl) of Mus musculus (Mouse).